Consider the following 576-residue polypeptide: CTP synthase (576 aa).

Positions 305-559 (QIALVGKYTH…LGLVAAAANI (255 aa)) constitute a Glutamine amidotransferase type-1 domain. Residues Cys404, His535, and Glu537 each act as for GATase activity in the active site.

This sequence belongs to the CTP synthase family.

The enzyme catalyses UTP + L-glutamine + ATP + H2O = CTP + L-glutamate + ADP + phosphate + 2 H(+). It functions in the pathway pyrimidine metabolism; CTP biosynthesis via de novo pathway; CTP from UDP: step 2/2. Catalyzes the ATP-dependent amination of UTP to CTP with either L-glutamine or ammonia as the source of nitrogen. In Eremothecium gossypii (strain ATCC 10895 / CBS 109.51 / FGSC 9923 / NRRL Y-1056) (Yeast), this protein is CTP synthase (URA7).